We begin with the raw amino-acid sequence, 156 residues long: Small ribosomal subunit protein uS7 (156 aa).

The protein belongs to the universal ribosomal protein uS7 family. In terms of assembly, part of the 30S ribosomal subunit. Contacts proteins S9 and S11.

Its function is as follows. One of the primary rRNA binding proteins, it binds directly to 16S rRNA where it nucleates assembly of the head domain of the 30S subunit. Is located at the subunit interface close to the decoding center, probably blocks exit of the E-site tRNA. The sequence is that of Small ribosomal subunit protein uS7 from Cupriavidus metallidurans (strain ATCC 43123 / DSM 2839 / NBRC 102507 / CH34) (Ralstonia metallidurans).